Reading from the N-terminus, the 110-residue chain is Vacuolar ATPase assembly integral membrane protein VMA21 (110 aa).

The tract at residues 1 to 28 is disordered; that stretch reads MTTRRIIGQDGEEKTYLDVDPRGPPGPS. At 1–44 the chain is on the cytoplasmic side; sequence MTTRRIIGQDGEEKTYLDVDPRGPPGPSNISPAVPASVIWKLMS. Residues 11 to 21 show a composition bias toward basic and acidic residues; that stretch reads GEEKTYLDVDP. A helical transmembrane segment spans residues 45 to 65; that stretch reads FTFAMITLPIGTYFFTVNYVF. Residues 66 to 71 lie on the Lumenal side of the membrane; it reads GGNATY. Residues 72–92 traverse the membrane as a helical segment; that stretch reads AGALAAIMANVVLIAYVIMAF. The Cytoplasmic portion of the chain corresponds to 93 to 110; it reads KDDQAEQAEDAREAKKEL. A Prevents secretion from ER motif is present at residues 107-110; that stretch reads KKEL.

Belongs to the VMA21 family.

It localises to the endoplasmic reticulum membrane. The protein localises to the endoplasmic reticulum-Golgi intermediate compartment membrane. The protein resides in the cytoplasmic vesicle. It is found in the COPII-coated vesicle membrane. Required for the assembly of the V0 complex of the vacuolar ATPase (V-ATPase) in the endoplasmic reticulum. The polypeptide is Vacuolar ATPase assembly integral membrane protein VMA21 (Phaeosphaeria nodorum (strain SN15 / ATCC MYA-4574 / FGSC 10173) (Glume blotch fungus)).